We begin with the raw amino-acid sequence, 90 residues long: MSATLNVLRWSALGAGVVYGFVHNRTLYSQAEKKVADAKFKKQEKLIEQAKAEWARLHPAPVASTGVVTDISDDKFDIEAYLNHAFPEKA.

Residue Ser-2 is modified to N-acetylserine. Residues 7–23 (VLRWSALGAGVVYGFVH) form a helical membrane-spanning segment.

In terms of assembly, F-type ATP synthases have 2 components, the catalytic core F(1) and the membrane-embedded component F(0), linked together by a central stalk and a peripheral stalk. The central stalk, also called rotor shaft, is often seen as part of F(1). The peripheral stalk is seen as part of F(0). F(0) contains the membrane channel next to the rotor. F-type ATP synthases form dimers but each monomer functions independently in ATP generation. The dimer consists of 17 different polypeptides: ATP1 (subunit alpha, 3 molecules per monomer, part of F(1)), ATP2 (subunit beta, 3 copies per monomer, part of F(1)), ATP3 (subunit gamma, part of the central stalk), ATP4 (subunit b, part of the peripheral stalk), ATP5/OSCP (subunit 5/OSCP, part of the peripheral stalk), ATP6 (subunit a, part of the peripheral stalk), ATP7 (subunit d, part of the peripheral stalk), ATP8 (subunit 8, part of the peripheral stalk), OLI1 (subunit c, part of the rotor, 10 molecules per monomer), ATP14 (subunit h, part of the peripheral stalk), ATP15 (subunit epsilon, part of the central stalk), ATP16 (subunit delta, part of the central stalk), ATP17 (subunit f, part of the peripheral stalk), ATP18 (subunit i/j, part of the peripheral stalk), ATP19 (subunit k, dimer-specific, at interface between monomers), ATP20 (subunit g, at interface between monomers), TIM11 (subunit e, at interface between monomers).

It is found in the mitochondrion inner membrane. Its function is as follows. Mitochondrial membrane ATP synthase (F(1)F(0) ATP synthase or Complex V) produces ATP from ADP in the presence of a proton gradient across the membrane which is generated by electron transport complexes of the respiratory chain. F-type ATP synthases consist of two structural domains, F(1) - containing the extramembraneous catalytic core, and F(0) - containing the membrane proton channel, linked together by a central stalk and a peripheral stalk. During catalysis, ATP synthesis in the catalytic domain of F(1) is coupled via a rotary mechanism of the central stalk subunits to proton translocation. Part of the complex F(0) domain. Minor subunit located with subunit a/ATP6 in the membrane. Together with subunit g/ATP20, probably contributes to membrane curvature at the site of the ATP synthase dimer, ultimately contributing to formation of cristae. In Yarrowia lipolytica (strain CLIB 122 / E 150) (Yeast), this protein is ATP synthase subunit e, mitochondrial.